We begin with the raw amino-acid sequence, 385 residues long: Homoserine O-succinyltransferase (385 aa).

The region spanning 51 to 360 (NAVLICHALS…DSPHGHDAFL (310 aa)) is the AB hydrolase-1 domain. Residue S157 is the Nucleophile of the active site. Position 227 (R227) interacts with substrate. Residues D323 and H356 contribute to the active site. D357 contacts substrate.

Belongs to the AB hydrolase superfamily. MetX family. Homodimer.

Its subcellular location is the cytoplasm. The enzyme catalyses L-homoserine + succinyl-CoA = O-succinyl-L-homoserine + CoA. Its pathway is amino-acid biosynthesis; L-methionine biosynthesis via de novo pathway; O-succinyl-L-homoserine from L-homoserine: step 1/1. Its function is as follows. Transfers a succinyl group from succinyl-CoA to L-homoserine, forming succinyl-L-homoserine. The chain is Homoserine O-succinyltransferase from Hahella chejuensis (strain KCTC 2396).